Here is a 359-residue protein sequence, read N- to C-terminus: Nicotinate-nucleotide--dimethylbenzimidazole phosphoribosyltransferase (359 aa).

The Proton acceptor role is filled by E318.

Belongs to the CobT family. Homodimer.

The catalysed reaction is 5,6-dimethylbenzimidazole + nicotinate beta-D-ribonucleotide = alpha-ribazole 5'-phosphate + nicotinate + H(+). Its pathway is nucleoside biosynthesis; alpha-ribazole biosynthesis; alpha-ribazole from 5,6-dimethylbenzimidazole: step 1/2. In terms of biological role, catalyzes the synthesis of alpha-ribazole-5'-phosphate from nicotinate mononucleotide (NAMN) and 5,6-dimethylbenzimidazole (DMB). This Escherichia coli (strain UTI89 / UPEC) protein is Nicotinate-nucleotide--dimethylbenzimidazole phosphoribosyltransferase.